We begin with the raw amino-acid sequence, 89 residues long: Small ribosomal subunit protein uS19 (89 aa).

This sequence belongs to the universal ribosomal protein uS19 family.

In terms of biological role, protein S19 forms a complex with S13 that binds strongly to the 16S ribosomal RNA. The polypeptide is Small ribosomal subunit protein uS19 (Stenotrophomonas maltophilia (strain R551-3)).